The sequence spans 738 residues: Catalase-peroxidase (738 aa).

Basic and acidic residues predominate over residues 1–16 (MSENHDAIVTDAKTEE). The segment at 1-37 (MSENHDAIVTDAKTEEAGGCPVAHGRAPHPTQGGGNR) is disordered. The tryptophyl-tyrosyl-methioninium (Trp-Tyr) (with M-257) cross-link spans 108 to 231 (WHSAGTYRIS…LGAVQMGLIY (124 aa)). Histidine 109 (proton acceptor) is an active-site residue. The tryptophyl-tyrosyl-methioninium (Tyr-Met) (with W-108) cross-link spans 231–257 (YVNPEGPNGNPDPIAAARDIRETFGRM). Residue histidine 272 participates in heme b binding.

This sequence belongs to the peroxidase family. Peroxidase/catalase subfamily. In terms of assembly, homodimer or homotetramer. The cofactor is heme b. In terms of processing, formation of the three residue Trp-Tyr-Met cross-link is important for the catalase, but not the peroxidase activity of the enzyme.

It catalyses the reaction H2O2 + AH2 = A + 2 H2O. The catalysed reaction is 2 H2O2 = O2 + 2 H2O. In terms of biological role, bifunctional enzyme with both catalase and broad-spectrum peroxidase activity. The polypeptide is Catalase-peroxidase (Streptomyces ambofaciens).